We begin with the raw amino-acid sequence, 495 residues long: MKYRDLRDFLSLLEQRGELKRISQPIDPYLEMTEIADRTLRAGGPALLFENPKGYNMPVLCNLFGTAKRVAMGMGQEDVSALRDVGKLLAFLKEPDPPKGFRDLFDKLPKFKQVLNMPTKCLSSAPCQEQVWEGEDVDLSRIPVMHCWPEDAAPLVSWGLTVTRGPHKERQNLGIYRQQVLGKNKLIMRWLSHRGGALDYQEWCEAHPGERFPVAVALGADPATILAAVTPVPDTLSEYAFAGLLRGHKTEVVKCLSNSLEVPASAEIVLEGYIEQGEMAPEGPYGDHTGYYNEIDSFPVFTVTHITQRKDAIYHSTYTGRPPDEPAVMGVALNEVFVPILQKQFPEIVDFYLPPEGCSYRLAVVTIKKQYAGHAKRVMMGVWSFLRQFMYTKFVIVCDDDINARDWNDVIWAITTRMDPSRDTVLIENTPIDYLDFASPVSGLGSKMGLDATNKWPAETPREWGRPIKMDEEVRARVDAIWDELAIFSDKETKR.

A Mn(2+)-binding site is contributed by Asn-172. Residues 175 to 177, 189 to 191, and 194 to 195 contribute to the prenylated FMN site; these read IYR, RWL, and RG. Residue Glu-238 coordinates Mn(2+). Catalysis depends on Asp-287, which acts as the Proton donor.

It belongs to the UbiD family. In terms of assembly, homohexamer. Prenylated FMN is required as a cofactor. Mn(2+) serves as cofactor.

Its subcellular location is the cell membrane. It catalyses the reaction a 4-hydroxy-3-(all-trans-polyprenyl)benzoate + H(+) = a 2-(all-trans-polyprenyl)phenol + CO2. Its pathway is cofactor biosynthesis; ubiquinone biosynthesis. Catalyzes the decarboxylation of 3-octaprenyl-4-hydroxy benzoate to 2-octaprenylphenol, an intermediate step in ubiquinone biosynthesis. This is 3-octaprenyl-4-hydroxybenzoate carboxy-lyase from Yersinia enterocolitica serotype O:8 / biotype 1B (strain NCTC 13174 / 8081).